The following is an 879-amino-acid chain: Phosphoenolpyruvate carboxylase (879 aa).

Active-site residues include H138 and K545.

It belongs to the PEPCase type 1 family. It depends on Mg(2+) as a cofactor.

It catalyses the reaction oxaloacetate + phosphate = phosphoenolpyruvate + hydrogencarbonate. In terms of biological role, forms oxaloacetate, a four-carbon dicarboxylic acid source for the tricarboxylic acid cycle. The sequence is that of Phosphoenolpyruvate carboxylase from Histophilus somni (strain 2336) (Haemophilus somnus).